The sequence spans 572 residues: Putative carbohydrate transport ATP-binding protein MPN_258 (572 aa).

2 ABC transporter domains span residues 6-253 and 327-572; these read FRME…MGKE and RFIR…LIMQ. 40-47 contacts ATP; that stretch reads GENGAGKS.

It belongs to the ABC transporter superfamily.

It is found in the cell membrane. In terms of biological role, part of the ABC transporter complex involved in carbohydrates import. Probably responsible for energy coupling to the transport system. The protein is Putative carbohydrate transport ATP-binding protein MPN_258 of Mycoplasma pneumoniae (strain ATCC 29342 / M129 / Subtype 1) (Mycoplasmoides pneumoniae).